A 465-amino-acid chain; its full sequence is MDSSPPNTIIEEAPPRFSELKPPLSEDIIEALDRSGFEVCTPVQAETIPFLCSHKDVVVDAATGSGKTLAFLLPFIEIIRRSNSYPPKPHQVMGVIISPTRELSAQIHKVARAVRLDFAKCREVEADMNTLEEEGANLLIGTPGRLSDMMKRMEFLDFRNLEILILDEADRLLDMGFQKQVNYIISRLPKQRRTGLFSATQTQAVADLAKAGLRNPYLKCEADQKSSQLVHLLIENKNKKLVVFFMTCACVDYWGLVISKIPSLKSISFFPTHGKMDQKGRDTALASFTEASSGVLLCTDVAARGLDIPGIVYIRSLAIKDREVLEKGLKAFVSFVRAYKEHQCSYIFSWKGLEIGKLAMGYGILSFPYISEVKQDRIGIVGFTPVQGITFEDIKFKNKSREKQRQQNLLARKDKLQQEKRGKRKKSSKEAVDDSNKASRKRKLTGRQRQTIQTAQDEEEMNLRL.

Residues 17–45 (FSELKPPLSEDIIEALDRSGFEVCTPVQA) carry the Q motif motif. The 172-residue stretch at 48–219 (IPFLCSHKDV…KAGLRNPYLK (172 aa)) folds into the Helicase ATP-binding domain. ATP is bound at residue 61-68 (AATGSGKT). A DEAD box motif is present at residues 167–170 (DEAD). The 195-residue stretch at 228–422 (QLVHLLIENK…KDKLQQEKRG (195 aa)) folds into the Helicase C-terminal domain. Positions 413 to 465 (KDKLQQEKRGKRKKSSKEAVDDSNKASRKRKLTGRQRQTIQTAQDEEEMNLRL) are disordered. Basic and acidic residues predominate over residues 428–437 (SKEAVDDSNK). The span at 456 to 465 (QDEEEMNLRL) shows a compositional bias: acidic residues.

The protein belongs to the DEAD box helicase family. DDX55/SPB4 subfamily.

The catalysed reaction is ATP + H2O = ADP + phosphate + H(+). The protein is DEAD-box ATP-dependent RNA helicase 55 (RH55) of Arabidopsis thaliana (Mouse-ear cress).